The primary structure comprises 132 residues: Agouti-signaling protein (132 aa).

An N-terminal signal peptide occupies residues 1–22; sequence MDVTRLLLATLLVFLCFFTVYS. An N-linked (GlcNAc...) asparagine glycan is attached at Asn39. The interval 62-88 is disordered; it reads ISRKEAEKKRSSKKEASMKKVAQPRTP. The segment covering 63-79 has biased composition (basic and acidic residues); it reads SRKEAEKKRSSKKEASM. 5 cysteine pairs are disulfide-bonded: Cys93/Cys108, Cys100/Cys114, Cys107/Cys125, Cys111/Cys132, and Cys116/Cys123. An Agouti domain is found at 93–132; the sequence is CVATRYSCKPPAPACCDPCASCQCRFFRSACSCRVLRLNC.

The protein localises to the secreted. Involved in the regulation of melanogenesis. The binding of ASP to MC1R precludes alpha-MSH initiated signaling and thus blocks production of cAMP, leading to a down-regulation of eumelanogenesis (brown/black pigment) and thus increasing synthesis of pheomelanin (yellow/red pigment). The protein is Agouti-signaling protein (ASIP) of Semnopithecus entellus (Northern plains gray langur).